Reading from the N-terminus, the 453-residue chain is Ribosomal protein uS12 methylthiotransferase RimO (453 aa).

The MTTase N-terminal domain occupies 9–124 (PKVGFVSLGC…VMEAVHTHLP (116 aa)). [4Fe-4S] cluster-binding residues include cysteine 18, cysteine 54, cysteine 83, cysteine 155, cysteine 159, and cysteine 162. The 242-residue stretch at 141 to 382 (LTPKHYAYLK…MEVAERVSAR (242 aa)) folds into the Radical SAM core domain. In terms of domain architecture, TRAM spans 385–453 (QRKVGKTLRV…ADGHDLWGEV (69 aa)).

This sequence belongs to the methylthiotransferase family. RimO subfamily. [4Fe-4S] cluster is required as a cofactor.

It localises to the cytoplasm. The enzyme catalyses L-aspartate(89)-[ribosomal protein uS12]-hydrogen + (sulfur carrier)-SH + AH2 + 2 S-adenosyl-L-methionine = 3-methylsulfanyl-L-aspartate(89)-[ribosomal protein uS12]-hydrogen + (sulfur carrier)-H + 5'-deoxyadenosine + L-methionine + A + S-adenosyl-L-homocysteine + 2 H(+). Its function is as follows. Catalyzes the methylthiolation of an aspartic acid residue of ribosomal protein uS12. This Ralstonia nicotianae (strain ATCC BAA-1114 / GMI1000) (Ralstonia solanacearum) protein is Ribosomal protein uS12 methylthiotransferase RimO.